Reading from the N-terminus, the 242-residue chain is tRNA uridine(34) hydroxylase (242 aa).

A Rhodanese domain is found at 128-222 (DGREVVMLDT…YFEETGGPGY (95 aa)). The active-site Cysteine persulfide intermediate is the Cys182.

This sequence belongs to the TrhO family.

It catalyses the reaction uridine(34) in tRNA + AH2 + O2 = 5-hydroxyuridine(34) in tRNA + A + H2O. Its function is as follows. Catalyzes oxygen-dependent 5-hydroxyuridine (ho5U) modification at position 34 in tRNAs. The protein is tRNA uridine(34) hydroxylase of Bordetella avium (strain 197N).